We begin with the raw amino-acid sequence, 204 residues long: MTGDKLDASEGLEEASLRFIEDGSLAQEEEGEGFDFFFKKSSFLAATDSSDDEGGASSGDEGEASSDDEGDASSDDEEEASSDGEGVVEDEETLDAEGEDSDEEGEGGMQAVDCKKFFKLKRREILFFMRKFYFGRKVTRSHVHLFLKKLKRKSTLEICNCAANRFIDAASLFFYFFNVSYLNFFIRQGYLYQNFNRIVARPPT.

The tract at residues 47-108 (TDSSDDEGGA…EDSDEEGEGG (62 aa)) is disordered. Positions 49 to 106 (SSDDEGGASSGDEGEASSDDEGDASSDDEEEASSDGEGVVEDEETLDAEGEDSDEEGE) are enriched in acidic residues.

It localises to the mitochondrion. This is an uncharacterized protein from Paramecium tetraurelia.